Consider the following 124-residue polypeptide: Large ribosomal subunit protein bL19 (124 aa).

The protein belongs to the bacterial ribosomal protein bL19 family.

This protein is located at the 30S-50S ribosomal subunit interface and may play a role in the structure and function of the aminoacyl-tRNA binding site. The sequence is that of Large ribosomal subunit protein bL19 from Zymomonas mobilis subsp. mobilis (strain ATCC 31821 / ZM4 / CP4).